Here is a 385-residue protein sequence, read N- to C-terminus: DNA double-strand break repair protein Mre11 (385 aa).

Mn(2+) contacts are provided by Asp-14, His-16, and Asp-58. The active-site Proton donor is the His-94. Residues His-180, His-216, and His-218 each coordinate Mn(2+).

Belongs to the MRE11/RAD32 family. Homodimer. Forms a heterotetramer composed of two Mre11 subunits and two Rad50 subunits. Homodimerization facilitates DNA binding. The cofactor is Mn(2+).

Its activity is regulated as follows. Nuclease activity is regulated by Rad50. The mirin-derivative PFM39, specifically inhibits the 3'-5' exonuclease activity. The N-alkylated mirin-derivatives PFM03 and PFM01 specifically inhibit the endonuclease activity. In terms of biological role, part of the Rad50/Mre11 complex, which is involved in the early steps of DNA double-strand break (DSB) repair. The complex may facilitate opening of the processed DNA ends to aid in the recruitment of HerA and NurA. Mre11 binds to DSB ends and has both double-stranded 3'-5' exonuclease activity and single-stranded endonuclease activity. This chain is DNA double-strand break repair protein Mre11, found in Thermotoga maritima (strain ATCC 43589 / DSM 3109 / JCM 10099 / NBRC 100826 / MSB8).